We begin with the raw amino-acid sequence, 1208 residues long: DNA-directed RNA polymerase subunit beta (1208 aa).

It belongs to the RNA polymerase beta chain family. As to quaternary structure, the RNAP catalytic core consists of 2 alpha, 1 beta, 1 beta' and 1 omega subunit. When a sigma factor is associated with the core the holoenzyme is formed, which can initiate transcription.

The enzyme catalyses RNA(n) + a ribonucleoside 5'-triphosphate = RNA(n+1) + diphosphate. In terms of biological role, DNA-dependent RNA polymerase catalyzes the transcription of DNA into RNA using the four ribonucleoside triphosphates as substrates. The protein is DNA-directed RNA polymerase subunit beta of Enterococcus faecium (Streptococcus faecium).